Reading from the N-terminus, the 380-residue chain is Cytochrome b (380 aa).

4 helical membrane-spanning segments follow: residues 33–53 (FGSL…FLAM), 77–98 (WLLR…YLHI), 113–133 (WNIG…GYVL), and 178–198 (FFTF…LHLL). Heme b is bound by residues H83 and H97. Residues H182 and H196 each contribute to the heme b site. Residue H201 coordinates a ubiquinone. A run of 4 helical transmembrane segments spans residues 226–246 (YKDL…ALLN), 288–308 (LGGV…PVLH), 320–340 (PSQT…WIGG), and 347–367 (FIII…ILIP).

The protein belongs to the cytochrome b family. As to quaternary structure, the cytochrome bc1 complex contains 3 respiratory subunits (MT-CYB, CYC1 and UQCRFS1), 2 core proteins (UQCRC1 and UQCRC2) and probably 6 low-molecular weight proteins. Heme b is required as a cofactor.

Its subcellular location is the mitochondrion inner membrane. In terms of biological role, component of the ubiquinol-cytochrome c reductase complex (complex III or cytochrome b-c1 complex) that is part of the mitochondrial respiratory chain. The b-c1 complex mediates electron transfer from ubiquinol to cytochrome c. Contributes to the generation of a proton gradient across the mitochondrial membrane that is then used for ATP synthesis. The sequence is that of Cytochrome b (mt-cyb) from Atractosteus spatula (Alligator gar).